A 221-amino-acid polypeptide reads, in one-letter code: Eukaryotic translation initiation factor NCBP (221 aa).

The protein belongs to the eukaryotic initiation factor 4E family. As to quaternary structure, EIF4F is a multi-subunit complex, the composition of which varies with external and internal environmental conditions. It is composed of at least EIF4A, EIF4E and EIF4G. EIF4E is also known to interact with other partners. In higher plants two isoforms of EIF4F have been identified, named isoform EIF4F and isoform EIF(iso)4F. Isoform EIF4F has subunits p220 and p26, whereas isoform EIF(iso)4F has subunits p82 and p28.

Its function is as follows. Recognizes and binds the 7-methylguanosine-containing mRNA cap during an early step in the initiation of protein synthesis and facilitates ribosome binding by inducing the unwinding of the mRNAs secondary structures. This Arabidopsis thaliana (Mouse-ear cress) protein is Eukaryotic translation initiation factor NCBP (NCBP).